A 268-amino-acid polypeptide reads, in one-letter code: D-alanyl-D-alanine carboxypeptidase (268 aa).

A helical transmembrane segment spans residues 25-47; sequence AFLWAFIISFTVCTLFLGWRLVS. Substrate contacts are provided by residues glutamine 151, 179–181, and serine 186; that span reads WVA. Residues histidine 188 and aspartate 195 each contribute to the Zn(2+) site. The active-site Proton donor/acceptor is the glutamate 238. Histidine 241 is a binding site for Zn(2+).

It belongs to the peptidase M15B family. In terms of assembly, monomer. Zn(2+) is required as a cofactor.

It is found in the cell membrane. Carboxypeptidase activity is insensitive to beta-lactams since it is not affected by penicillin G or ampicillin and is inhibited only by very high concentrations of cefalotin and cefoxitin. Functionally, carboxypeptidase that cleaves the C-terminal D-alanine residue from the peptidoglycan-derived pentapeptide L-Ala-gamma-D-Glu-L-Lys-D-Ala-D-Ala in vitro. Therefore, should contribute in vivo to the hydrolysis of the D-alanyl-D-alanine-containing peptidoglycan precursors. May increase the level of glycopeptide antibiotics resistance by decreasing the availability of D-Ala-D-Ala termini from the cell surface, which constitute the antibiotic target residues. In Enterococcus faecalis (strain ATCC 700802 / V583), this protein is D-alanyl-D-alanine carboxypeptidase.